The following is a 345-amino-acid chain: Eukaryotic translation initiation factor 3 subunit F (345 aa).

The MPN domain occupies 30–166; that stretch reads VVIQPQALFS…TRAYISAPVG (137 aa). Positions 308 to 345 are disordered; it reads GGESGSTESGQRGGQRGGKGGRGGQQRNQERSGEEVRA. A compositionally biased stretch (gly residues) spans 318-331; that stretch reads QRGGQRGGKGGRGG. A compositionally biased stretch (basic and acidic residues) spans 335 to 345; the sequence is NQERSGEEVRA.

It belongs to the eIF-3 subunit F family. Component of the eukaryotic translation initiation factor 3 (eIF-3) complex.

It is found in the cytoplasm. Component of the eukaryotic translation initiation factor 3 (eIF-3) complex, which is involved in protein synthesis of a specialized repertoire of mRNAs and, together with other initiation factors, stimulates binding of mRNA and methionyl-tRNAi to the 40S ribosome. The eIF-3 complex specifically targets and initiates translation of a subset of mRNAs involved in cell proliferation. This chain is Eukaryotic translation initiation factor 3 subunit F, found in Aspergillus terreus (strain NIH 2624 / FGSC A1156).